An 887-amino-acid polypeptide reads, in one-letter code: Alanine--tRNA ligase (887 aa).

Residues His-565, His-569, Cys-674, and His-678 each coordinate Zn(2+).

It belongs to the class-II aminoacyl-tRNA synthetase family. The cofactor is Zn(2+).

It is found in the cytoplasm. The enzyme catalyses tRNA(Ala) + L-alanine + ATP = L-alanyl-tRNA(Ala) + AMP + diphosphate. Its function is as follows. Catalyzes the attachment of alanine to tRNA(Ala) in a two-step reaction: alanine is first activated by ATP to form Ala-AMP and then transferred to the acceptor end of tRNA(Ala). Also edits incorrectly charged Ser-tRNA(Ala) and Gly-tRNA(Ala) via its editing domain. This Erythrobacter litoralis (strain HTCC2594) protein is Alanine--tRNA ligase.